The primary structure comprises 375 residues: Succinyl-diaminopimelate desuccinylase (375 aa).

Zn(2+) is bound at residue His-66. Asp-68 is an active-site residue. A Zn(2+)-binding site is contributed by Asp-99. Glu-133 acts as the Proton acceptor in catalysis. Positions 134, 162, and 348 each coordinate Zn(2+).

It belongs to the peptidase M20A family. DapE subfamily. Homodimer. Zn(2+) is required as a cofactor. It depends on Co(2+) as a cofactor.

The enzyme catalyses N-succinyl-(2S,6S)-2,6-diaminopimelate + H2O = (2S,6S)-2,6-diaminopimelate + succinate. Its pathway is amino-acid biosynthesis; L-lysine biosynthesis via DAP pathway; LL-2,6-diaminopimelate from (S)-tetrahydrodipicolinate (succinylase route): step 3/3. Functionally, catalyzes the hydrolysis of N-succinyl-L,L-diaminopimelic acid (SDAP), forming succinate and LL-2,6-diaminopimelate (DAP), an intermediate involved in the bacterial biosynthesis of lysine and meso-diaminopimelic acid, an essential component of bacterial cell walls. The sequence is that of Succinyl-diaminopimelate desuccinylase from Salmonella dublin (strain CT_02021853).